The chain runs to 441 residues: Cytochrome P450 monooxygenase cpsC (441 aa).

A disordered region spans residues Ser175–Gln195. A compositionally biased stretch (polar residues) spans Thr186–Gln195. Residue Cys377 participates in heme binding.

It belongs to the cytochrome P450 family. It depends on heme as a cofactor.

It carries out the reaction campesine D + reduced [NADPH--hemoprotein reductase] + O2 = campesine G + oxidized [NADPH--hemoprotein reductase] + 2 H2O + H(+). It participates in alkaloid biosynthesis. Cytochrome P450 monooxygenase; part of the gene cluster that mediates the biosynthesis of campesine G, a dimeric indole piperazine alkaloid that shows good insecticidal activity Galleria mellonella. Within the pathway, cpsC catalyzes regioselective dehydrogenation reaction towards C2-N1 of the (2H)-indole ring of campesine D to yield the final product, campesine G. The non-canonical non-ribosomal peptide synthetase cpsA catalyzes the first steps of the pathway by producing L-tryptophanal and L-valinal from their respective amino-acids. These products condensate spontaneously to form trypyl-valyl pyrazine also known as didehydrocampesine A. The NmrA-like family domain-containing oxidoreductase cpsB is the next enzyme in cps pathway and reduces the unstable didehydrocampesine A to campesine A. The methyltransferase cpsF and the acetyltransferase cpsE both recognize N13 of piperazine ring to carry out methylation and acetylation of campesine A to produce campesine C and B, respectively. The cytochrome P450 monooxygenase cpsD then acts as a dimerase that catalyzes oxidative heterocoupling between campesine B and C to produce heterodimers with unexpected 6/5/6/6/6/6/5/6 eight-ring scaffold called campesine D. Finally,the cytochrome P450 monooxygenase cpsC is a regioselective dehydrogenase that catalyzes dehydrogenation reaction towards C2-N1 to produce campesine G. The polypeptide is Cytochrome P450 monooxygenase cpsC (Aspergillus campestris (strain IBT 28561)).